A 199-amino-acid chain; its full sequence is Probable chemoreceptor glutamine deamidase CheD (199 aa).

This sequence belongs to the CheD family.

It catalyses the reaction L-glutaminyl-[protein] + H2O = L-glutamyl-[protein] + NH4(+). In terms of biological role, probably deamidates glutamine residues to glutamate on methyl-accepting chemotaxis receptors (MCPs), playing an important role in chemotaxis. The polypeptide is Probable chemoreceptor glutamine deamidase CheD (Cereibacter sphaeroides (strain ATCC 17029 / ATH 2.4.9) (Rhodobacter sphaeroides)).